We begin with the raw amino-acid sequence, 359 residues long: GTP cyclohydrolase FolE2 (359 aa).

Belongs to the GTP cyclohydrolase IV family.

It catalyses the reaction GTP + H2O = 7,8-dihydroneopterin 3'-triphosphate + formate + H(+). It functions in the pathway cofactor biosynthesis; 7,8-dihydroneopterin triphosphate biosynthesis; 7,8-dihydroneopterin triphosphate from GTP: step 1/1. Converts GTP to 7,8-dihydroneopterin triphosphate. In Cereibacter sphaeroides (strain KD131 / KCTC 12085) (Rhodobacter sphaeroides), this protein is GTP cyclohydrolase FolE2.